The primary structure comprises 249 residues: Phosphate import ATP-binding protein PstB 3 (249 aa).

An ABC transporter domain is found at 4-244 (LVINNLDLYY…PQDERTENYI (241 aa)). An ATP-binding site is contributed by 36–43 (GPSGCGKS).

Belongs to the ABC transporter superfamily. Phosphate importer (TC 3.A.1.7) family. In terms of assembly, the complex is composed of two ATP-binding proteins (PstB), two transmembrane proteins (PstC and PstA) and a solute-binding protein (PstS).

The protein localises to the cell membrane. The enzyme catalyses phosphate(out) + ATP + H2O = ADP + 2 phosphate(in) + H(+). In terms of biological role, part of the ABC transporter complex PstSACB involved in phosphate import. Responsible for energy coupling to the transport system. In Streptococcus agalactiae serotype Ia (strain ATCC 27591 / A909 / CDC SS700), this protein is Phosphate import ATP-binding protein PstB 3.